A 186-amino-acid polypeptide reads, in one-letter code: UPF0397 protein lp_0150 (186 aa).

A run of 5 helical transmembrane segments spans residues 12-32 (VVATGIGAAVIFVLMKFVAIP), 45-65 (GFLALLGAIFGPVAAGLAVFI), 76-96 (GSPWWTWVIVDGLIGVAFGLA), 112-132 (LVWFNIYQIIVNFIGWVLLAP), and 151-171 (VITWIADSISVAIIGTILLVL).

This sequence belongs to the UPF0397 family.

The protein localises to the cell membrane. The chain is UPF0397 protein lp_0150 from Lactiplantibacillus plantarum (strain ATCC BAA-793 / NCIMB 8826 / WCFS1) (Lactobacillus plantarum).